Reading from the N-terminus, the 206-residue chain is Thymidylate kinase (206 aa).

11–18 is an ATP binding site; it reads GIDGAGKT.

It belongs to the thymidylate kinase family.

The catalysed reaction is dTMP + ATP = dTDP + ADP. Functionally, phosphorylation of dTMP to form dTDP in both de novo and salvage pathways of dTTP synthesis. The polypeptide is Thymidylate kinase (Burkholderia vietnamiensis (strain G4 / LMG 22486) (Burkholderia cepacia (strain R1808))).